Reading from the N-terminus, the 194-residue chain is Imidazoleglycerol-phosphate dehydratase (194 aa).

The protein belongs to the imidazoleglycerol-phosphate dehydratase family.

The protein resides in the cytoplasm. It carries out the reaction D-erythro-1-(imidazol-4-yl)glycerol 3-phosphate = 3-(imidazol-4-yl)-2-oxopropyl phosphate + H2O. It participates in amino-acid biosynthesis; L-histidine biosynthesis; L-histidine from 5-phospho-alpha-D-ribose 1-diphosphate: step 6/9. The sequence is that of Imidazoleglycerol-phosphate dehydratase from Listeria monocytogenes serotype 4a (strain HCC23).